Here is a 143-residue protein sequence, read N- to C-terminus: Nucleoside diphosphate kinase (143 aa).

ATP-binding residues include K11, F59, R87, T93, R104, and N114. H117 serves as the catalytic Pros-phosphohistidine intermediate.

It belongs to the NDK family. In terms of assembly, homotetramer. The cofactor is Mg(2+).

The protein resides in the cytoplasm. It carries out the reaction a 2'-deoxyribonucleoside 5'-diphosphate + ATP = a 2'-deoxyribonucleoside 5'-triphosphate + ADP. The catalysed reaction is a ribonucleoside 5'-diphosphate + ATP = a ribonucleoside 5'-triphosphate + ADP. Functionally, major role in the synthesis of nucleoside triphosphates other than ATP. The ATP gamma phosphate is transferred to the NDP beta phosphate via a ping-pong mechanism, using a phosphorylated active-site intermediate. The sequence is that of Nucleoside diphosphate kinase from Shewanella sp. (strain W3-18-1).